Reading from the N-terminus, the 332-residue chain is tRNA-dihydrouridine synthase B (332 aa).

FMN is bound by residues Pro19 to Ala21 and Gln73. Cys103 (proton donor) is an active-site residue. FMN is bound by residues Lys142, Asn203–Asp205, and Gly227–Arg228.

This sequence belongs to the Dus family. DusB subfamily. FMN serves as cofactor.

It catalyses the reaction a 5,6-dihydrouridine in tRNA + NAD(+) = a uridine in tRNA + NADH + H(+). The catalysed reaction is a 5,6-dihydrouridine in tRNA + NADP(+) = a uridine in tRNA + NADPH + H(+). Functionally, catalyzes the synthesis of 5,6-dihydrouridine (D), a modified base found in the D-loop of most tRNAs, via the reduction of the C5-C6 double bond in target uridines. The chain is tRNA-dihydrouridine synthase B from Pseudomonas aeruginosa (strain ATCC 15692 / DSM 22644 / CIP 104116 / JCM 14847 / LMG 12228 / 1C / PRS 101 / PAO1).